Consider the following 317-residue polypeptide: Homoserine kinase (317 aa).

ATP is bound at residue 95 to 105 (PHSRGLGSSAA).

This sequence belongs to the GHMP kinase family. Homoserine kinase subfamily.

Its subcellular location is the cytoplasm. It catalyses the reaction L-homoserine + ATP = O-phospho-L-homoserine + ADP + H(+). It participates in amino-acid biosynthesis; L-threonine biosynthesis; L-threonine from L-aspartate: step 4/5. Catalyzes the ATP-dependent phosphorylation of L-homoserine to L-homoserine phosphate. The polypeptide is Homoserine kinase (Mycolicibacterium smegmatis (strain ATCC 700084 / mc(2)155) (Mycobacterium smegmatis)).